The primary structure comprises 365 residues: NADH-quinone oxidoreductase subunit D (365 aa).

It belongs to the complex I 49 kDa subunit family. As to quaternary structure, NDH-1 is composed of 14 different subunits. Subunits NuoB, C, D, E, F, and G constitute the peripheral sector of the complex.

The protein resides in the cell membrane. The enzyme catalyses a quinone + NADH + 5 H(+)(in) = a quinol + NAD(+) + 4 H(+)(out). In terms of biological role, NDH-1 shuttles electrons from NADH, via FMN and iron-sulfur (Fe-S) centers, to quinones in the respiratory chain. The immediate electron acceptor for the enzyme in this species is believed to be a menaquinone. Couples the redox reaction to proton translocation (for every two electrons transferred, four hydrogen ions are translocated across the cytoplasmic membrane), and thus conserves the redox energy in a proton gradient. This Carboxydothermus hydrogenoformans (strain ATCC BAA-161 / DSM 6008 / Z-2901) protein is NADH-quinone oxidoreductase subunit D.